Consider the following 227-residue polypeptide: ATP-dependent dethiobiotin synthetase BioD (227 aa).

An ATP-binding site is contributed by 13 to 18 (DIGKTY). T17 provides a ligand contact to Mg(2+). The active site involves K38. S42 lines the substrate pocket. Residues D55, 116–119 (EGSG), and 179–180 (NN) each bind ATP. Mg(2+)-binding residues include D55 and E116.

This sequence belongs to the dethiobiotin synthetase family. Homodimer. It depends on Mg(2+) as a cofactor.

The protein resides in the cytoplasm. The catalysed reaction is (7R,8S)-7,8-diammoniononanoate + CO2 + ATP = (4R,5S)-dethiobiotin + ADP + phosphate + 3 H(+). Its pathway is cofactor biosynthesis; biotin biosynthesis; biotin from 7,8-diaminononanoate: step 1/2. Catalyzes a mechanistically unusual reaction, the ATP-dependent insertion of CO2 between the N7 and N8 nitrogen atoms of 7,8-diaminopelargonic acid (DAPA, also called 7,8-diammoniononanoate) to form a ureido ring. The chain is ATP-dependent dethiobiotin synthetase BioD from Clostridium botulinum (strain Eklund 17B / Type B).